A 197-amino-acid polypeptide reads, in one-letter code: LexA repressor (197 aa).

A DNA-binding region (H-T-H motif) is located at residues 28-47; that stretch reads VREIARRFRITPRGALLHLI. Active-site for autocatalytic cleavage activity residues include serine 119 and lysine 156.

It belongs to the peptidase S24 family. As to quaternary structure, homodimer.

It carries out the reaction Hydrolysis of Ala-|-Gly bond in repressor LexA.. In terms of biological role, represses a number of genes involved in the response to DNA damage (SOS response), including recA and lexA. In the presence of single-stranded DNA, RecA interacts with LexA causing an autocatalytic cleavage which disrupts the DNA-binding part of LexA, leading to derepression of the SOS regulon and eventually DNA repair. In Thermotoga petrophila (strain ATCC BAA-488 / DSM 13995 / JCM 10881 / RKU-1), this protein is LexA repressor.